Consider the following 299-residue polypeptide: MVATDLKNNKNIAILGSGNLGVSIARGIVASGHYKSNQIVLTRRTLEKIQHLKDEEGFQITSDNLEAANKCAILIIGVLPAQVPQLLESIKHLVTKDHIIISVVLGITISGIRSHLQPDVYTPIVRAMPNTAIQYCESMTCIANKSDHPTKSGTAEQELADQNALEVTEKIFNCCGECITISEEAMVSAPALCSCGTAFFCRIIRAAASAGCEIGFHAEDAVRIAAQTAKGAAIMLLKNDSHPESEIDRITTPSGATIAGLNTMEHNGLSSAIIKGIVMSAEKSSKSQAALNKLNNVSS.

This sequence belongs to the pyrroline-5-carboxylate reductase family. Homodecamer; composed of 5 homodimers.

The catalysed reaction is L-proline + NADP(+) = (S)-1-pyrroline-5-carboxylate + NADPH + 2 H(+). It carries out the reaction L-proline + NAD(+) = (S)-1-pyrroline-5-carboxylate + NADH + 2 H(+). It functions in the pathway amino-acid biosynthesis; L-proline biosynthesis; L-proline from L-glutamate 5-semialdehyde: step 1/1. The protein is Pyrroline-5-carboxylate reductase 2 (pycr2) of Dictyostelium discoideum (Social amoeba).